The chain runs to 344 residues: MRILEFDEKRQAAKLHIESEDDLWILHLILEKGDKVVAKTTRDIGLGKESRRIPMTIVLKVDYTEFQEFTNRLRIHGIIEDAPERFGIRGAHHTINLDIGDEIIIIKQQWNKYALDKLKKQADKRSKIIIALVDFDEYLIAIPFEQGIKILSEKSLRSLNEEEGIIEQNALEVATELAEYVKQYNPDAILLAGPGFFKEEVAKKVNNILKNKKVYIDSVSSATRAGLHEILKRDIIDKIMSDYEIAIGAKKMEKAMELLAKQPELVTYGLEQVKNAVEMGAVETVLLIEDLLSSNNQERLAIERILEDIENKRGEIILVPKESPIYFELKNLTGILAILRFRIN.

Belongs to the eukaryotic release factor 1 family. Pelota subfamily. In terms of assembly, monomer. A divalent metal cation is required as a cofactor.

It is found in the cytoplasm. In terms of biological role, may function in recognizing stalled ribosomes, interact with stem-loop structures in stalled mRNA molecules, and effect endonucleolytic cleavage of the mRNA. May play a role in the release non-functional ribosomes and degradation of damaged mRNAs. Has endoribonuclease activity. This Saccharolobus islandicus (strain Y.N.15.51 / Yellowstone #2) (Sulfolobus islandicus) protein is Protein pelota homolog.